Reading from the N-terminus, the 527-residue chain is MERQEKANNAGHMVDVVVIGGGISGLSAAKLLNEYGINVLVLEARDRVGGRTYTVRNENVDYVDVGGAYVGPTQNRILRLSKELGLETYKVNVNECLVQYVKGKSYPFRGAFPPVWNPIAYLDYNNLWRTMDDMGKKIPADAPWESPHAEEWDKMTMKDLIDKICWTKTAKRFASLFVNINVTSEPHEVSALWFLWYVKQCGGTTRIFSVTNGGQERKFVGGSGQVSERIMHLLGDRVKLRCPVTYVDQSGDNIIVETLNHELYECQYVISAIPPTLTAKIHFRPELPSERNQLIQRLPMGAIIKCMMYYKEAFWKKKNYCGCMIIEDEEAPISITLDDTKPDGSLPAIMGFILARKADRLAKVHKEVRKRKICELYAKVLGSQEASHPVHYEEKNWCEEQYSGGCYTAYFPPGIMTQYGRVIRQPVGRIFFAGTETATQWSGYMEGAVEAGERAAREILNALGKVSKKDIWLREPESEDVPAFEITRTFWERNLPSVTGLLKIIGFSTSVTALWLAVYKFRLLTRS.

The residue at position 1 (Met-1) is an N-acetylmethionine. The Cytoplasmic segment spans residues 1–497 (MERQEKANNA…RTFWERNLPS (497 aa)). Ser-383 carries the phosphoserine modification. Cys-406 is modified (S-8alpha-FAD cysteine). Residues 498–518 (VTGLLKIIGFSTSVTALWLAV) traverse the membrane as a helical; Anchor for type IV membrane protein segment. Residues 519–527 (YKFRLLTRS) lie on the Mitochondrial intermembrane side of the membrane. Residues 520–522 (KFR) are interaction with membrane phospholipid headgroups.

This sequence belongs to the flavin monoamine oxidase family. Monomer, homo- or heterodimer (containing two subunits of similar size). Each subunit contains a covalently bound flavin. Enzymatically active as monomer. It depends on FAD as a cofactor.

Its subcellular location is the mitochondrion outer membrane. The enzyme catalyses a secondary aliphatic amine + O2 + H2O = a primary amine + an aldehyde + H2O2. It catalyses the reaction a primary methyl amine + O2 + H2O = an aldehyde + H2O2 + NH4(+). The catalysed reaction is (R)-adrenaline + O2 + H2O = (R)-3,4-dihydroxymandelaldehyde + methylamine + H2O2. It carries out the reaction dopamine + O2 + H2O = 3,4-dihydroxyphenylacetaldehyde + H2O2 + NH4(+). The enzyme catalyses tyramine + O2 + H2O = (4-hydroxyphenyl)acetaldehyde + H2O2 + NH4(+). It catalyses the reaction (R)-noradrenaline + O2 + H2O = (R)-3,4-dihydroxymandelaldehyde + H2O2 + NH4(+). The catalysed reaction is serotonin + O2 + H2O = (5-hydroxyindol-3-yl)acetaldehyde + H2O2 + NH4(+). It carries out the reaction kynuramine + O2 + H2O = 3-(2-aminophenyl)-3-oxopropanal + H2O2 + NH4(+). The enzyme catalyses tryptamine + O2 + H2O = indole-3-acetaldehyde + H2O2 + NH4(+). It catalyses the reaction 2-phenylethylamine + O2 + H2O = 2-phenylacetaldehyde + H2O2 + NH4(+). Its function is as follows. Catalyzes the oxidative deamination of primary and some secondary amine such as neurotransmitters, with concomitant reduction of oxygen to hydrogen peroxide and has important functions in the metabolism of neuroactive and vasoactive amines in the central nervous system and peripheral tissues. Preferentially oxidizes serotonin. Also catalyzes the oxidative deamination of kynuramine to 3-(2-aminophenyl)-3-oxopropanal that can spontaneously condense to 4-hydroxyquinoline. This is Amine oxidase [flavin-containing] A from Sus scrofa (Pig).